The chain runs to 381 residues: 40-kDa huntingtin-associated protein (381 aa).

Position 2 is an N-acetylalanine (Ala-2). Positions 34–36 match the Nuclear localization signal motif; it reads KKR. The interval 221 to 265 is disordered; that stretch reads QLELLPQPPSGPQPPLSGPQPRPVLGSTLPLPQPPDHAPGSVAPS. The span at 226–242 shows a compositional bias: pro residues; sequence PQPPSGPQPPLSGPQPR.

In terms of assembly, interacts with HTT (via C-terminus). Interacts with RAB5A. Found in a complex with F8A1/F8A2/F8A3, HTT and RAB5A; mediates the recruitment of HTT by RAB5A onto early endosomes. Produced abundantly in a wide variety of cell types.

It localises to the cytoplasm. Its subcellular location is the nucleus. The protein resides in the early endosome. The protein localises to the nuclear body. RAB5A effector molecule that is involved in vesicular trafficking of early endosomes. Mediates the recruitment of HTT by RAB5A onto early endosomes. The HTT-F8A1/F8A2/F8A3-RAB5A complex stimulates early endosomal interaction with actin filaments and inhibits interaction with microtubules, leading to the reduction of endosome motility. The protein is 40-kDa huntingtin-associated protein (F8a1) of Mus musculus (Mouse).